Consider the following 165-residue polypeptide: Glycine cleavage system H protein, mitochondrial (165 aa).

The 83-residue stretch at 57-139 (NAIVGISSYA…YEKGWLFKVD (83 aa)) folds into the Lipoyl-binding domain. The residue at position 98 (Lys-98) is an N6-lipoyllysine.

This sequence belongs to the GcvH family. The glycine cleavage system is composed of four proteins: P, T, L and H. (R)-lipoate serves as cofactor.

The protein localises to the mitochondrion. Functionally, the glycine cleavage system catalyzes the degradation of glycine. The H protein shuttles the methylamine group of glycine from the P protein to the T protein. The polypeptide is Glycine cleavage system H protein, mitochondrial (ppl) (Drosophila melanogaster (Fruit fly)).